We begin with the raw amino-acid sequence, 387 residues long: Pepsin A-5 (387 aa).

An N-terminal signal peptide occupies residues 1–15 (MKWLWVLGLVALSEC). A propeptide spans 16–62 (LVKIPLMKIKSMRENLRESQVLKDYLEKYPRSRAHVLLEQRRNPAVT) (activation peptide). Positions 74–384 (YIGIISIGTP…DRANNRIGLA (311 aa)) constitute a Peptidase A1 domain. Residue D92 is part of the active site. Intrachain disulfides connect C105–C110 and C266–C270. D275 is a catalytic residue. A disulfide bridge connects residues C309 and C343.

It belongs to the peptidase A1 family. In terms of tissue distribution, expressed in glandular chief cells of the neonatal stomach. Expressed in yolk sacs of the placenta (at protein level).

Its subcellular location is the secreted. It catalyses the reaction Preferential cleavage: hydrophobic, preferably aromatic, residues in P1 and P1' positions. Cleaves 1-Phe-|-Val-2, 4-Gln-|-His-5, 13-Glu-|-Ala-14, 14-Ala-|-Leu-15, 15-Leu-|-Tyr-16, 16-Tyr-|-Leu-17, 23-Gly-|-Phe-24, 24-Phe-|-Phe-25 and 25-Phe-|-Tyr-26 bonds in the B chain of insulin.. Inhibited by pepstatin A. In terms of biological role, shows particularly broad specificity; although bonds involving phenylalanine and leucine are preferred, many others are also cleaved to some extent. May play a role as a specialized neonatal digestive enzyme. This is Pepsin A-5 from Mus musculus (Mouse).